A 465-amino-acid chain; its full sequence is Cysteine--tRNA ligase (465 aa).

Zn(2+) is bound at residue Cys27. The 'HIGH' region motif lies at 29-39 (PTVYDDAHLGH). The Zn(2+) site is built by Cys207, His237, and Glu241. Residues 269 to 273 (KMSKS) carry the 'KMSKS' region motif. Lys272 is an ATP binding site.

Belongs to the class-I aminoacyl-tRNA synthetase family. In terms of assembly, monomer. Zn(2+) serves as cofactor.

It is found in the cytoplasm. It catalyses the reaction tRNA(Cys) + L-cysteine + ATP = L-cysteinyl-tRNA(Cys) + AMP + diphosphate. The polypeptide is Cysteine--tRNA ligase (Helicobacter acinonychis (strain Sheeba)).